The following is a 305-amino-acid chain: Ornithine carbamoyltransferase, catabolic (305 aa).

Residues 50-53 (STRT), glutamine 77, arginine 101, and 128-131 (HPLQ) contribute to the carbamoyl phosphate site. Residues asparagine 159, aspartate 223, and 227–228 (SM) contribute to the L-ornithine site. Carbamoyl phosphate is bound by residues 263–264 (CL) and arginine 291.

This sequence belongs to the aspartate/ornithine carbamoyltransferase superfamily. OTCase family.

It is found in the cytoplasm. The enzyme catalyses carbamoyl phosphate + L-ornithine = L-citrulline + phosphate + H(+). Its pathway is amino-acid degradation; L-arginine degradation via ADI pathway; carbamoyl phosphate from L-arginine: step 2/2. Reversibly catalyzes the transfer of the carbamoyl group from carbamoyl phosphate (CP) to the N(epsilon) atom of ornithine (ORN) to produce L-citrulline. The chain is Ornithine carbamoyltransferase, catabolic from Thermoplasma volcanium (strain ATCC 51530 / DSM 4299 / JCM 9571 / NBRC 15438 / GSS1).